A 263-amino-acid chain; its full sequence is Superoxide dismutase [Fe] 3, chloroplastic (263 aa).

The transit peptide at Met1–Arg41 directs the protein to the chloroplast. His74, His127, Asp211, and His215 together coordinate Fe cation.

It belongs to the iron/manganese superoxide dismutase family. As to quaternary structure, homodimer. Heterodimer with FSD2. Interacts with MRL7. The cofactor is Fe cation.

The protein localises to the plastid. Its subcellular location is the chloroplast thylakoid. The catalysed reaction is 2 superoxide + 2 H(+) = H2O2 + O2. Activated by cpn20/cpn21 (in vitro). In terms of biological role, destroys superoxide anion radicals which are normally produced within the cells and which are toxic to biological systems. Plays important role in chloroplast development, particularly in the maintenance of thylakoids membranes. Seems to act as a heterodimer with FSD2. This chain is Superoxide dismutase [Fe] 3, chloroplastic, found in Arabidopsis thaliana (Mouse-ear cress).